We begin with the raw amino-acid sequence, 101 residues long: Small ribosomal subunit protein bS18c (101 aa).

The span at methionine 1 to leucine 19 shows a compositional bias: basic residues. Residues methionine 1–glycine 23 are disordered.

Belongs to the bacterial ribosomal protein bS18 family. In terms of assembly, part of the 30S ribosomal subunit.

The protein resides in the plastid. It localises to the chloroplast. The sequence is that of Small ribosomal subunit protein bS18c from Liriodendron tulipifera (Tuliptree).